Consider the following 790-residue polypeptide: Serine/threonine-protein kinase DCLK3 (790 aa).

Residues 1-37 (MPAAPVLRPPPPPATPAPPAPSRPAPPIPGHRGPCDH) form a disordered region. The span at 7 to 29 (LRPPPPPATPAPPAPSRPAPPIP) shows a compositional bias: pro residues. A Doublecortin domain is found at 97-183 (RVVTVVKLGG…KEPLTLKSIQ (87 aa)). The span at 201-218 (HSRVPSPRLRSRLPSKLL) shows a compositional bias: low complexity. Disordered stretches follow at residues 201-290 (HSRV…SGEK) and 315-506 (LQLG…KGII). Basic and acidic residues-rich tracts occupy residues 332 to 345 (DLGR…EKLV), 352 to 400 (RPSE…ESQD), 425 to 434 (IDMRREDRHT), and 457 to 496 (TRGE…ERPS). The Protein kinase domain maps to 514–771 (YDIGGVIGDG…AEQVLQHPWI (258 aa)). ATP-binding positions include 520 to 528 (IGDGNFATV) and Lys543. The active-site Proton acceptor is the Asp635.

Belongs to the protein kinase superfamily. CAMK Ser/Thr protein kinase family. CaMK subfamily. Highly expressed in brain and to a lower extent in liver and kidney.

It localises to the cytoplasm. It is found in the nucleus. The enzyme catalyses L-seryl-[protein] + ATP = O-phospho-L-seryl-[protein] + ADP + H(+). The catalysed reaction is L-threonyl-[protein] + ATP = O-phospho-L-threonyl-[protein] + ADP + H(+). In Mus musculus (Mouse), this protein is Serine/threonine-protein kinase DCLK3 (Dclk3).